The sequence spans 160 residues: Transcriptional repressor NrdR (160 aa).

Residues 3-34 (CPFCRHADTQVVDSRVSEDGATIRRRRRCPAC) fold into a zinc finger. Residues 49 to 139 (PSVVKKDGSR…VYRRFEDVSE (91 aa)) enclose the ATP-cone domain.

It belongs to the NrdR family. It depends on Zn(2+) as a cofactor.

Its function is as follows. Negatively regulates transcription of bacterial ribonucleotide reductase nrd genes and operons by binding to NrdR-boxes. This is Transcriptional repressor NrdR from Paraburkholderia phytofirmans (strain DSM 17436 / LMG 22146 / PsJN) (Burkholderia phytofirmans).